The following is a 485-amino-acid chain: MEKQVRVRYAPSPTGHLHIGNARTALFNYLFARHQDGKFIIRIEDTDVKRNVAGGEESQLKYLKWLGMDWDEGVDVGGEFGPYRQTERLDIYKKLYKDLLERDLAYKCYMTEEELEAEREGQIARGETPRYAGNHRDLTEEQIKGFEAEGRIPSIRFRVPADSDYTFKDLVKDEVAFHSNDFGDFVIVKKDGIPTYNFAVAVDDHLMEITHVLRGDDHISNTPKQMMIYEAFGWDIPKFGHMTLIVNESRKKLSKRDESIIQFIEQYKELGYLPEAIFNFIALLGWSPVGEEEVFSQDEFIKMFDAARLSKSPALFDSQKLKWMNNQYMKKQDLDTVVELSLPHLVKAGRVGENLSEQEQAWVRDVIALYHDQMSFGAEIVELSEMFFKDHVDHEEEGQEVLKGEQVPEVLRAFADQLEALEAMEPAAVKAAIKAVQKETGHKGKNLFMPIRVATTGQTHGPELPNAIALLGKEKVLNRIQKVIG.

The short motif at 11 to 21 (PSPTGHLHIGN) is the 'HIGH' region element. A 'KMSKS' region motif is present at residues 252–256 (KLSKR). An ATP-binding site is contributed by Lys-255.

The protein belongs to the class-I aminoacyl-tRNA synthetase family. Glutamate--tRNA ligase type 1 subfamily. Monomer.

The protein resides in the cytoplasm. It catalyses the reaction tRNA(Glu) + L-glutamate + ATP = L-glutamyl-tRNA(Glu) + AMP + diphosphate. In terms of biological role, catalyzes the attachment of glutamate to tRNA(Glu) in a two-step reaction: glutamate is first activated by ATP to form Glu-AMP and then transferred to the acceptor end of tRNA(Glu). The sequence is that of Glutamate--tRNA ligase from Bacillus mycoides (strain KBAB4) (Bacillus weihenstephanensis).